Reading from the N-terminus, the 41-residue chain is uncharacterized protein (41 aa).

Positions methionine 1–alanine 12 are enriched in basic and acidic residues. A disordered region spans residues methionine 1–aspartate 23.

This is an uncharacterized protein from Homo sapiens (Human).